The following is a 554-amino-acid chain: Guanine nucleotide-binding protein alpha-2 subunit (554 aa).

Disordered stretches follow at residues 1–139 (MGLC…NNSN) and 157–183 (VNGN…THSG). Gly-2 carries N-myristoyl glycine lipidation. The S-palmitoyl cysteine moiety is linked to residue Cys-4. Composition is skewed to basic and acidic residues over residues 7–17 (KDSRESTHDGG) and 28–43 (ANRR…DKKQ). A compositionally biased stretch (low complexity) spans 52-66 (GSIVNAASNINNSSS). Polar residues predominate over residues 67–85 (GKTKISTVSEDGTVSNGVG). Positions 91-139 (DNANNKNNGNNNNSNNNDNNNNNNNNIGNNINGNNNNDSENIHDSNNSN) are enriched in low complexity. In terms of domain architecture, G-alpha spans 228–554 (NALKVLLLGS…ENSLKDSGVL (327 aa)). A G1 motif region spans residues 231-244 (KVLLLGSGESGKST). GTP-binding residues include Glu-239, Ser-240, Gly-241, Lys-242, Ser-243, Thr-244, Asp-351, Ile-376, Thr-382, Gly-405, Asn-471, Lys-472, Asp-474, and Ala-526. A Mg(2+)-binding site is contributed by Ser-243. The interval 374-382 (DVIRTRKKT) is G2 motif. Mg(2+) is bound at residue Thr-382. The interval 398 to 407 (LHFFDVGGQR) is G3 motif. Positions 467 to 474 (VLFLNKID) are G4 motif. The G5 motif stretch occupies residues 524–529 (TQATDT).

The protein belongs to the G-alpha family. In terms of assembly, g proteins are composed of 3 units; alpha, beta and gamma. The alpha chain contains the guanine nucleotide binding site. Mg(2+) is required as a cofactor.

Guanine nucleotide-binding proteins (G proteins) are involved as modulators or transducers in various transmembrane signaling systems. This protein may be involved in the determination of the cAMP level according to nutritional conditions, most probably as a regulator of adenylyl cyclase. The polypeptide is Guanine nucleotide-binding protein alpha-2 subunit (GPA2) (Kluyveromyces lactis (strain ATCC 8585 / CBS 2359 / DSM 70799 / NBRC 1267 / NRRL Y-1140 / WM37) (Yeast)).